The following is a 65-amino-acid chain: Small, acid-soluble spore protein C3 (65 aa).

Belongs to the alpha/beta-type SASP family.

Functionally, SASP are bound to spore DNA. They are double-stranded DNA-binding proteins that cause DNA to change to an a-like conformation. They protect the DNA backbone from chemical and enzymatic cleavage and are thus involved in dormant spore's high resistance to UV light. The chain is Small, acid-soluble spore protein C3 (SASP-C3) from Priestia megaterium (Bacillus megaterium).